The sequence spans 131 residues: UPF0102 protein YraN (131 aa).

It belongs to the UPF0102 family.

This chain is UPF0102 protein YraN, found in Salmonella arizonae (strain ATCC BAA-731 / CDC346-86 / RSK2980).